A 473-amino-acid polypeptide reads, in one-letter code: G2/mitotic-specific cyclin-1 (473 aa).

The span at M1–R12 shows a compositional bias: polar residues. Disordered stretches follow at residues M1–Q23 and K134–L155. A compositionally biased stretch (basic and acidic residues) spans K134 to S147.

Belongs to the cyclin family. Cyclin AB subfamily. In terms of assembly, interacts with the CDC2 and CDK2 protein kinases to form a serine/threonine kinase holoenzyme complex. The cyclin subunit imparts substrate specificity to the complex.

Functionally, essential for the control of the cell cycle at the G2/M (mitosis) transition. G2/M cyclins accumulate steadily during G2 and are abruptly destroyed at mitosis. This is G2/mitotic-specific cyclin-1 from Antirrhinum majus (Garden snapdragon).